The primary structure comprises 436 residues: ATP-dependent protease ATPase subunit HslU (436 aa).

Residues isoleucine 18, glycine 60–glutamate 65, aspartate 249, glutamate 314, and arginine 386 each bind ATP.

This sequence belongs to the ClpX chaperone family. HslU subfamily. As to quaternary structure, a double ring-shaped homohexamer of HslV is capped on each side by a ring-shaped HslU homohexamer. The assembly of the HslU/HslV complex is dependent on binding of ATP.

It localises to the cytoplasm. ATPase subunit of a proteasome-like degradation complex; this subunit has chaperone activity. The binding of ATP and its subsequent hydrolysis by HslU are essential for unfolding of protein substrates subsequently hydrolyzed by HslV. HslU recognizes the N-terminal part of its protein substrates and unfolds these before they are guided to HslV for hydrolysis. In Ruegeria sp. (strain TM1040) (Silicibacter sp.), this protein is ATP-dependent protease ATPase subunit HslU.